A 248-amino-acid chain; its full sequence is Ribosomal RNA small subunit methyltransferase G (248 aa).

S-adenosyl-L-methionine is bound by residues glycine 85, phenylalanine 90, 137-138 (IE), and arginine 156.

This sequence belongs to the methyltransferase superfamily. RNA methyltransferase RsmG family.

The protein localises to the cytoplasm. In terms of biological role, specifically methylates the N7 position of a guanine in 16S rRNA. This chain is Ribosomal RNA small subunit methyltransferase G, found in Parasynechococcus marenigrum (strain WH8102).